The sequence spans 1180 residues: MSSSKKLAGLRDNFSLLGEKNKILVANRGEIPIRIFRSAHELSMRTIAIYSHEDRLSMHRLKADEAYVIGEEGQYTPVGAYLAMDEIIEIAKKHKVDFIHPGYGFLSENSEFADKVVKAGITWIGPPAEVIDSVGDKVSARHLAARANVPTVPGTPGPIETVQEALDFVNEYGYPVIIKAAFGGGGRGMRVVREGDDVADAFQRATSEARTAFGNGTCFVERFLDKPKHIEVQLLADNHGNVVHLFERDCSVQRRHQKVVEVAPAKTLPREVRDAILTDAVKLAKVCGYRNAGTAEFLVDNQNRHYFIEINPRIQVEHTITEEITGIDIVSAQIQIAAGATLTQLGLLQDKITTRGFSIQCRITTEDPSKNFQPDTGRLEVYRSAGGNGVRLDGGNAYAGATISPHYDSMLVKCSCSGSTYEIVRRKMIRALIEFRIRGVKTNIPFLLTLLTNPVFIEGTYWTTFIDDTPQLFQMVSSQNRAQKLLHYLADLAVNGSSIKGQIGLPKLKSNPSVPHLHDAQGNVINVTKSAPPSGWRQVLLEKGPSEFAKQVRQFNGTLLMDTTWRDAHQSLLATRVRTHDLATIAPTTAHALAGAFALECWGGATFDVAMRFLHEDPWERLRKLRSLVPNIPFQMLLRGANGVAYSSLPDNAIDHFVKQAKDNGVDIFRVFDALNDLEQLKVGVNAVKKAGGVVEATVCYSGDMLQPGKKYNLDYYLEVVEKIVQMGTHILGIKDMAGTMKPAAAKLLIGSLRTRYPDLPIHVHSHDSAGTAVASMTACALAGADVVDVAINSMSGLTSQPSINALLASLEGNIDTGINVEHVRELDAYWAEMRLLYSCFEADLKGPDPEVYQHEIPGGQLTNLLFQAQQLGLGEQWAETKRAYREANYLLGDIVKVTPTSKVVGDLAQFMVSNKLTSDDIRRLANSLDFPDSVMDFFEGLIGQPYGGFPEPLRSDVLRNKRRKLTCRPGLELEPFDLEKIREDLQNRFGDIDECDVASYNMYPRVYEDFQKIRETYGDLSVLPTKNFLAPAEPDEEIEVTIEQGKTLIIKLQAVGDLNKKTGQREVYFELNGELRKIRVADKSQNIQSVAKPKADVHDTHQIGAPMAGVIIEVKVHKGSLVKKGESIAVLSAMKMEMVVSSPADGQVKDVFIKDGESVDASDLLVVLEEETLPPSQKK.

An N-acetylserine modification is found at S2. The 453-residue stretch at 19–471 folds into the Biotin carboxylation domain; it reads EKNKILVANR…WTTFIDDTPQ (453 aa). K137, E221, and H256 together coordinate ATP. The 198-residue stretch at 141–338 folds into the ATP-grasp domain; it reads RHLAARANVP…IVSAQIQIAA (198 aa). R313 is an active-site residue. The Pyruvate carboxyltransferase domain maps to 558–825; the sequence is TLLMDTTWRD…DTGINVEHVR (268 aa). Substrate is bound by residues 566 to 570 and R639; that span reads RDAHQ. D567 contacts a divalent metal cation. The a divalent metal cation site is built by K735, H765, and H767. K735 is modified (N6-carboxylysine). T899 is a binding site for substrate. Residues 1095-1170 enclose the Biotinyl-binding domain; that stretch reads KADVHDTHQI…DASDLLVVLE (76 aa). Residue K1136 is modified to N6-biotinyllysine.

Homotetramer. The cofactor is biotin. Zn(2+) is required as a cofactor.

The protein resides in the cytoplasm. The catalysed reaction is hydrogencarbonate + pyruvate + ATP = oxaloacetate + ADP + phosphate + H(+). It functions in the pathway carbohydrate biosynthesis; gluconeogenesis. Functionally, pyruvate carboxylase catalyzes a 2-step reaction, involving the ATP-dependent carboxylation of the covalently attached biotin in the first step and the transfer of the carboxyl group to pyruvate in the second. The sequence is that of Pyruvate carboxylase 2 (PYC2) from Saccharomyces cerevisiae (strain ATCC 204508 / S288c) (Baker's yeast).